Reading from the N-terminus, the 241-residue chain is Carboxy-S-adenosyl-L-methionine synthase (241 aa).

S-adenosyl-L-methionine-binding positions include Tyr38, 63–65, 88–89, 116–117, Asn131, and Arg198; these read GCS, DN, and DI.

Belongs to the class I-like SAM-binding methyltransferase superfamily. Cx-SAM synthase family. In terms of assembly, homodimer.

It carries out the reaction prephenate + S-adenosyl-L-methionine = carboxy-S-adenosyl-L-methionine + 3-phenylpyruvate + H2O. In terms of biological role, catalyzes the conversion of S-adenosyl-L-methionine (SAM) to carboxy-S-adenosyl-L-methionine (Cx-SAM). The chain is Carboxy-S-adenosyl-L-methionine synthase from Actinobacillus pleuropneumoniae serotype 7 (strain AP76).